Consider the following 271-residue polypeptide: Tryptophan synthase alpha chain (271 aa).

Active-site proton acceptor residues include E49 and D60.

The protein belongs to the TrpA family. As to quaternary structure, tetramer of two alpha and two beta chains.

The catalysed reaction is (1S,2R)-1-C-(indol-3-yl)glycerol 3-phosphate + L-serine = D-glyceraldehyde 3-phosphate + L-tryptophan + H2O. The protein operates within amino-acid biosynthesis; L-tryptophan biosynthesis; L-tryptophan from chorismate: step 5/5. The alpha subunit is responsible for the aldol cleavage of indoleglycerol phosphate to indole and glyceraldehyde 3-phosphate. This Paraburkholderia phymatum (strain DSM 17167 / CIP 108236 / LMG 21445 / STM815) (Burkholderia phymatum) protein is Tryptophan synthase alpha chain.